Consider the following 578-residue polypeptide: Avenacosidase 2 (578 aa).

A chloroplast-targeting transit peptide spans M1 to S57. A beta-D-glucoside contacts are provided by residues Q89, H193, and N238–E239. Catalysis depends on E239, which acts as the Proton donor. C258 and C264 are disulfide-bonded. Residues Y381, E454, W504, E511–W512, and F520 contribute to the a beta-D-glucoside site. Catalysis depends on E454, which acts as the Nucleophile.

The protein belongs to the glycosyl hydrolase 1 family. In terms of assembly, heteromultimer with P60A in a 1:1 stoichiometry. Aggregates to form the fibrillar stromacentre.

The protein resides in the plastid. It is found in the chloroplast stroma. The catalysed reaction is avenacoside B + H2O = 26-desgluco-avenacoside B + D-glucose. Functionally, beta-glucosidase acting as a preformed defense system. Hydrolyzes the bisdesmosides avenacosides A and B to 26-desgluco-avenacosides exhibiting fungicidal activity. Can use beta-fucoside &gt; beta-glucoside &gt; beta-galactoside &gt; beta-xyloside as substrates, but not alpha-glycosides, beta-thioglucosides and disaccharides. The chain is Avenacosidase 2 (P60B) from Avena sativa (Oat).